The following is a 156-amino-acid chain: Probable low-salt glycan biosynthesis epimerase Agl13 (156 aa).

Residues arginine 19, glutamate 24, 39–41 (MSY), arginine 51, histidine 54, and histidine 109 each bind substrate.

The protein belongs to the dTDP-4-dehydrorhamnose 3,5-epimerase family.

The protein operates within protein modification; protein glycosylation. It participates in cell surface structure biogenesis; S-layer biogenesis. In terms of biological role, epimerase involved in N-glycan biosynthetic pathway that takes place under low-salt conditions (1.75 M instead of 3.4 M). Participates in the formation of the tetrasaccharide present at 'Asn-532' of S-layer glycoprotein Csg, consisting of a sulfated hexose, 2 hexoses and rhamnose. Involved in the addition of final rhamnose (sugar 4) of the tetrasaccharide on the dolichol phosphate carrier. In Haloferax volcanii (strain ATCC 29605 / DSM 3757 / JCM 8879 / NBRC 14742 / NCIMB 2012 / VKM B-1768 / DS2) (Halobacterium volcanii), this protein is Probable low-salt glycan biosynthesis epimerase Agl13 (agl13).